Reading from the N-terminus, the 66-residue chain is Alpha-conotoxin RegIIA (66 aa).

The signal sequence occupies residues 1 to 21 (MGMRMMFTVFLLVVLTTTVVS). The propeptide occupies 22 to 49 (STSVRASDGRNAAADNRASDLIAQIVRR). 2 cysteine pairs are disulfide-bonded: Cys-51–Cys-57 and Cys-52–Cys-65. The segment at 53–55 (SHP) is ser-Xaa-Pro motif, crucial for potent interaction with nAChR. Cys-65 carries the post-translational modification Cysteine amide.

Belongs to the conotoxin A superfamily. As to expression, expressed by the venom duct.

It localises to the secreted. In terms of biological role, alpha-conotoxins act on postsynaptic membranes, they bind to the nicotinic acetylcholine receptors (nAChR) and thus inhibit them. This toxin potently inhibits alpha-3 containing subunit nAChR. It inhibits alpha-3-beta-2/CHRNA3-CHRNB2 (IC(50)=10.7-33 nM (rat)/132.4-704.1 nM (human)) and alpha-3-beta-4/CHRNA3-CHRNB4 (IC(50)=47.3-97 nM (rat)/52.1 nM (human)). It also inhibits alpha-7/CHRNA7 nAChR with IC(50)=103-210 nM (human)/41-61.2 nM (rat) nAChRs. It is more potent on alpha-3-beta-2 receptors in human than in rat, due to a variation (Pro vs Gln) in alpha-3 subunit in these orthologs. Conversely, does not show species-specific differences in sensitivity at the alpha-3-beta-4 receptor. In Conus regius (Crown cone), this protein is Alpha-conotoxin RegIIA.